The chain runs to 236 residues: Protein YIPF6 (236 aa).

A2 carries the post-translational modification N-acetylalanine. At A2 to A84 the chain is on the cytoplasmic side. S7 carries the post-translational modification Phosphoserine. A helical membrane pass occupies residues L85–L105. The Lumenal portion of the chain corresponds to Q106–G116. The chain crosses the membrane as a helical span at residues G117–L137. Residues N138–S147 lie on the Cytoplasmic side of the membrane. The chain crosses the membrane as a helical span at residues F148–I168. The Lumenal portion of the chain corresponds to C169–R185. Residues L186–D206 form a helical membrane-spanning segment. Residues S207–K213 are Cytoplasmic-facing. Residues A214 to F234 traverse the membrane as a helical segment. Residues T235–P236 lie on the Lumenal side of the membrane.

It belongs to the YIP1 family. As to quaternary structure, predominantly interacts with YIPF1 or YIPF2, but may also form a ternary complex with YIPF1 and YIPF2. This interaction may stabilize YIPF1 and YIPF2.

It localises to the golgi apparatus membrane. May be required for stable YIPF1 and YIPF2 protein expression. The sequence is that of Protein YIPF6 (Yipf6) from Mus musculus (Mouse).